A 125-amino-acid polypeptide reads, in one-letter code: Small ribosomal subunit protein bS6 (125 aa).

Residues 96-125 form a disordered region; that stretch reads VTEASPMKAAKEERKPLAEVENNDFEDAEE. Residues 104-113 show a composition bias toward basic and acidic residues; it reads AAKEERKPLA. The segment covering 116 to 125 has biased composition (acidic residues); the sequence is ENNDFEDAEE.

It belongs to the bacterial ribosomal protein bS6 family.

Its function is as follows. Binds together with bS18 to 16S ribosomal RNA. The protein is Small ribosomal subunit protein bS6 of Haemophilus influenzae (strain 86-028NP).